An 80-amino-acid polypeptide reads, in one-letter code: APTEADATWVDLYNRVMIHQPASSYYAAEMHNEAKTDNPEEVLDLDRDVFMSAAYGIVDTVWYVQAELVNGRGGAVVAGL.

The active site involves His19.

This sequence belongs to the peptidase S14 family. In terms of assembly, component of the chloroplastic Clp protease core complex.

The protein localises to the plastid. It is found in the chloroplast. It catalyses the reaction Hydrolysis of proteins to small peptides in the presence of ATP and magnesium. alpha-casein is the usual test substrate. In the absence of ATP, only oligopeptides shorter than five residues are hydrolyzed (such as succinyl-Leu-Tyr-|-NHMec, and Leu-Tyr-Leu-|-Tyr-Trp, in which cleavage of the -Tyr-|-Leu- and -Tyr-|-Trp bonds also occurs).. Cleaves peptides in various proteins in a process that requires ATP hydrolysis. Has a chymotrypsin-like activity. Plays a major role in the degradation of misfolded proteins. The protein is Putative ATP-dependent Clp protease proteolytic subunit of Pinus strobus (Eastern white pine).